Reading from the N-terminus, the 77-residue chain is Lantipeptide prochlorosin 4.3 (77 aa).

Residues 1-64 (MSEEQLKAFI…DDELEGVAGG (64 aa)) constitute a propeptide that is removed on maturation. Threonine 65 is subject to 2,3-didehydrobutyrine. The lanthionine (Ser-Cys) cross-link spans 67–70 (SGGC). The beta-methyllanthionine (Thr-Cys) cross-link spans 72–76 (TSMFC).

Cross-links are proved in vitro, when coepressed in E.coli with the ProcM lanthionine synthetase. Post-translationally, the lanthionine residue has both a DL configuration (with 2S,6R stereochemistry) and a LL configuration (with 2R,6R stereochemistry). DL and LL diastomers have a 4:1 ratio. It is unknown whether nonenzymatic cyclization occur, but authors favor a model in which ProcM does generate all thioether cross-links. The beta-methyllanthionine residue has a DL configuration (with 2S,3S,6R stereochemistry). In terms of processing, maturation of prochlorosin involves the enzymatic conversion of Thr, and Ser into dehydrated AA and the formation of thioether bonds with cysteines. This is followed by membrane translocation and cleavage of the modified precursor.

It localises to the secreted. Functionally, lanthionine-containing peptide (lantipeptide) with unknown function. Does not show antibiotic activity against Lactococcus lactis 117 and Bacillus subtilis 6633 bacteria. Organisms that produce this peptide live in oligotrophic environments at very dilute concentrations, suggesting this peptide is not secreted to influence other bacteria. In Prochlorococcus marinus (strain MIT 9313), this protein is Lantipeptide prochlorosin 4.3.